Reading from the N-terminus, the 457-residue chain is MALWGGRFTQAADQRFKQFNDSLRFDYRLAEQDIVGSVAWSKALVTVGVLTAEEQAQLEEALSVLLEDVRARPQQILESDAEDIHSWVEGKLIDKVGQLGKKLHTGRSRNDQVATDLKLWCKDTVSELLTANRQLQSALVETAQNNQDAVMPGYTHLQRAQPVTFAHWCLAYVEMLARDESRLQDALKRLDVSPLGCGALAGTAYEIDREQLAGWLGFASATRNSLDSVSDRDHVLELLSAAAIGMVHLSRFAEDLIFFNTGEAGFVELSDRVTSGSSLMPQKKNPDALELIRGKCGRVQGALTGMMMTLKGLPLAYNKDMQEDKEGLFDALDTWLDCLHMAALVLDGIQVKRPRCQEAAQQGYANATELADYLVAKGVPFREAHHIVGEAVVEAIRQGKPLEDLPLDELQKFSPVIGEDVYPILSLQSCLDKRAAKGGVSPQQVAQAIAFAQARLG.

It belongs to the lyase 1 family. Argininosuccinate lyase subfamily.

The protein localises to the cytoplasm. The enzyme catalyses 2-(N(omega)-L-arginino)succinate = fumarate + L-arginine. The protein operates within amino-acid biosynthesis; L-arginine biosynthesis; L-arginine from L-ornithine and carbamoyl phosphate: step 3/3. The protein is Argininosuccinate lyase of Shigella sonnei (strain Ss046).